We begin with the raw amino-acid sequence, 288 residues long: 4-diphosphocytidyl-2-C-methyl-D-erythritol kinase (288 aa).

Residue lysine 11 is part of the active site. ATP is bound at residue 100 to 110 (PIAAGLGSGSS). Aspartate 140 is an active-site residue.

It belongs to the GHMP kinase family. IspE subfamily.

The enzyme catalyses 4-CDP-2-C-methyl-D-erythritol + ATP = 4-CDP-2-C-methyl-D-erythritol 2-phosphate + ADP + H(+). Its pathway is isoprenoid biosynthesis; isopentenyl diphosphate biosynthesis via DXP pathway; isopentenyl diphosphate from 1-deoxy-D-xylulose 5-phosphate: step 3/6. In terms of biological role, catalyzes the phosphorylation of the position 2 hydroxy group of 4-diphosphocytidyl-2C-methyl-D-erythritol. The protein is 4-diphosphocytidyl-2-C-methyl-D-erythritol kinase of Wolbachia sp. subsp. Drosophila simulans (strain wRi).